The sequence spans 194 residues: 3-isopropylmalate dehydratase small subunit (194 aa).

The protein belongs to the LeuD family. LeuD type 1 subfamily. In terms of assembly, heterodimer of LeuC and LeuD.

The catalysed reaction is (2R,3S)-3-isopropylmalate = (2S)-2-isopropylmalate. It participates in amino-acid biosynthesis; L-leucine biosynthesis; L-leucine from 3-methyl-2-oxobutanoate: step 2/4. Catalyzes the isomerization between 2-isopropylmalate and 3-isopropylmalate, via the formation of 2-isopropylmaleate. The chain is 3-isopropylmalate dehydratase small subunit from Brevibacillus brevis (strain 47 / JCM 6285 / NBRC 100599).